The chain runs to 313 residues: Porphobilinogen deaminase 2 (313 aa).

Cys-246 is subject to S-(dipyrrolylmethanemethyl)cysteine.

It belongs to the HMBS family. As to quaternary structure, monomer. Dipyrromethane serves as cofactor.

The enzyme catalyses 4 porphobilinogen + H2O = hydroxymethylbilane + 4 NH4(+). It participates in porphyrin-containing compound metabolism; protoporphyrin-IX biosynthesis; coproporphyrinogen-III from 5-aminolevulinate: step 2/4. Its function is as follows. Tetrapolymerization of the monopyrrole PBG into the hydroxymethylbilane pre-uroporphyrinogen in several discrete steps. This chain is Porphobilinogen deaminase 2 (hemC2), found in Streptomyces coelicolor (strain ATCC BAA-471 / A3(2) / M145).